The chain runs to 845 residues: Alanine--tRNA ligase (845 aa).

Zn(2+) is bound by residues His552, His556, Cys653, and His657.

It belongs to the class-II aminoacyl-tRNA synthetase family. It depends on Zn(2+) as a cofactor.

It is found in the cytoplasm. The enzyme catalyses tRNA(Ala) + L-alanine + ATP = L-alanyl-tRNA(Ala) + AMP + diphosphate. Functionally, catalyzes the attachment of alanine to tRNA(Ala) in a two-step reaction: alanine is first activated by ATP to form Ala-AMP and then transferred to the acceptor end of tRNA(Ala). Also edits incorrectly charged Ser-tRNA(Ala) and Gly-tRNA(Ala) via its editing domain. The sequence is that of Alanine--tRNA ligase from Campylobacter hominis (strain ATCC BAA-381 / DSM 21671 / CCUG 45161 / LMG 19568 / NCTC 13146 / CH001A).